Consider the following 223-residue polypeptide: Deoxyribose-phosphate aldolase (223 aa).

Asp-91 (proton donor/acceptor) is an active-site residue. The active-site Schiff-base intermediate with acetaldehyde is Lys-154. Lys-183 (proton donor/acceptor) is an active-site residue.

This sequence belongs to the DeoC/FbaB aldolase family. DeoC type 1 subfamily.

The protein resides in the cytoplasm. It catalyses the reaction 2-deoxy-D-ribose 5-phosphate = D-glyceraldehyde 3-phosphate + acetaldehyde. It participates in carbohydrate degradation; 2-deoxy-D-ribose 1-phosphate degradation; D-glyceraldehyde 3-phosphate and acetaldehyde from 2-deoxy-alpha-D-ribose 1-phosphate: step 2/2. Catalyzes a reversible aldol reaction between acetaldehyde and D-glyceraldehyde 3-phosphate to generate 2-deoxy-D-ribose 5-phosphate. The sequence is that of Deoxyribose-phosphate aldolase from Geobacillus sp. (strain WCH70).